A 400-amino-acid chain; its full sequence is Enoyl-[acyl-carrier-protein] reductase [NADH] 2 (400 aa).

NAD(+) is bound by residues 48–53 (GASSGF), 75–76 (FE), 112–113 (DA), and 141–142 (LA). Position 228 (Tyr-228) interacts with substrate. Residue Tyr-238 is the Proton donor of the active site. NAD(+)-binding positions include Lys-247 and 276–278 (LVT).

It belongs to the TER reductase family. In terms of assembly, monomer.

It catalyses the reaction a 2,3-saturated acyl-[ACP] + NAD(+) = a (2E)-enoyl-[ACP] + NADH + H(+). It participates in lipid metabolism; fatty acid biosynthesis. Involved in the final reduction of the elongation cycle of fatty acid synthesis (FAS II). Catalyzes the reduction of a carbon-carbon double bond in an enoyl moiety that is covalently linked to an acyl carrier protein (ACP). In Vibrio vulnificus (strain YJ016), this protein is Enoyl-[acyl-carrier-protein] reductase [NADH] 2.